The chain runs to 200 residues: NADH-quinone oxidoreductase subunit I (200 aa).

2 consecutive 4Fe-4S ferredoxin-type domains span residues 73–102 (RLLE…METT) and 112–141 (LNYS…HGGD). [4Fe-4S] cluster-binding residues include cysteine 82, cysteine 85, cysteine 88, cysteine 92, cysteine 121, cysteine 124, cysteine 127, and cysteine 131.

Belongs to the complex I 23 kDa subunit family. As to quaternary structure, NDH-1 is composed of 14 different subunits. Subunits NuoA, H, J, K, L, M, N constitute the membrane sector of the complex. Requires [4Fe-4S] cluster as cofactor.

The protein localises to the cell inner membrane. It catalyses the reaction a quinone + NADH + 5 H(+)(in) = a quinol + NAD(+) + 4 H(+)(out). Functionally, NDH-1 shuttles electrons from NADH, via FMN and iron-sulfur (Fe-S) centers, to quinones in the respiratory chain. The immediate electron acceptor for the enzyme in this species is believed to be ubiquinone. Couples the redox reaction to proton translocation (for every two electrons transferred, four hydrogen ions are translocated across the cytoplasmic membrane), and thus conserves the redox energy in a proton gradient. The sequence is that of NADH-quinone oxidoreductase subunit I from Campylobacter hominis (strain ATCC BAA-381 / DSM 21671 / CCUG 45161 / LMG 19568 / NCTC 13146 / CH001A).